Here is a 92-residue protein sequence, read N- to C-terminus: MARSLKKGPFIDDHLMKKVEALEEGGKKTVIKTWSRRSTIFPNFIGHTIAVYDGRKHVPVYVTEDMVGHKLGEFAPTRTYKGHGADDKKTKR.

It belongs to the universal ribosomal protein uS19 family.

Protein S19 forms a complex with S13 that binds strongly to the 16S ribosomal RNA. The polypeptide is Small ribosomal subunit protein uS19 (Macrococcus caseolyticus (strain JCSC5402) (Macrococcoides caseolyticum)).